A 223-amino-acid chain; its full sequence is Putative lipoprotein NMB1126/NMB1164 (223 aa).

The first 19 residues, 1-19 (MKTVSTAVVLAAAAVSLTG), serve as a signal peptide directing secretion. Cys20 carries the N-palmitoyl cysteine lipid modification. A lipid anchor (S-diacylglycerol cysteine) is attached at Cys20.

It is found in the cell membrane. The sequence is that of Putative lipoprotein NMB1126/NMB1164 from Neisseria meningitidis serogroup B (strain ATCC BAA-335 / MC58).